A 186-amino-acid polypeptide reads, in one-letter code: Adenylate kinase (186 aa).

12–17 contacts ATP; the sequence is GAGKGT. An NMP region spans residues 32-61; that stretch reads STGDLLRAEVNAQSPLGKEAALIMNKGELV. AMP-binding positions include Thr33, Arg38, 59 to 61, 86 to 89, and Gln93; these read ELV and GFPR. Residues 127-133 are LID; that stretch reads SRGRSDD. Arg128 lines the ATP pocket. AMP-binding residues include Arg130 and Arg141. Gly169 lines the ATP pocket.

Belongs to the adenylate kinase family. In terms of assembly, monomer.

Its subcellular location is the cytoplasm. It catalyses the reaction AMP + ATP = 2 ADP. It functions in the pathway purine metabolism; AMP biosynthesis via salvage pathway; AMP from ADP: step 1/1. Functionally, catalyzes the reversible transfer of the terminal phosphate group between ATP and AMP. Plays an important role in cellular energy homeostasis and in adenine nucleotide metabolism. The protein is Adenylate kinase of Prochlorococcus marinus (strain MIT 9211).